A 576-amino-acid polypeptide reads, in one-letter code: Urease subunit alpha (576 aa).

In terms of domain architecture, Urease spans Gly132–Phe576. His137, His139, and Lys220 together coordinate Ni(2+). Position 220 is an N6-carboxylysine (Lys220). His222 serves as a coordination point for substrate. 2 residues coordinate Ni(2+): His249 and His275. His323 functions as the Proton donor in the catalytic mechanism. Asp363 serves as a coordination point for Ni(2+).

The protein belongs to the metallo-dependent hydrolases superfamily. Urease alpha subunit family. As to quaternary structure, heterotrimer of UreA (gamma), UreB (beta) and UreC (alpha) subunits. Three heterotrimers associate to form the active enzyme. Ni cation serves as cofactor. In terms of processing, carboxylation allows a single lysine to coordinate two nickel ions.

The protein resides in the cytoplasm. It carries out the reaction urea + 2 H2O + H(+) = hydrogencarbonate + 2 NH4(+). It functions in the pathway nitrogen metabolism; urea degradation; CO(2) and NH(3) from urea (urease route): step 1/1. The sequence is that of Urease subunit alpha from Paenarthrobacter aurescens (strain TC1).